The primary structure comprises 195 residues: Thymidine kinase (195 aa).

ATP is bound by residues 9–16 (ATMNAGKS) and 89–92 (DEAQ). Glu-90 acts as the Proton acceptor in catalysis. Zn(2+) is bound by residues Cys-147, Cys-149, Cys-184, and His-187.

The protein belongs to the thymidine kinase family. Homotetramer.

The protein resides in the cytoplasm. It catalyses the reaction thymidine + ATP = dTMP + ADP + H(+). This is Thymidine kinase from Rhizobium meliloti (strain 1021) (Ensifer meliloti).